Consider the following 263-residue polypeptide: Tryptophan 2,3-dioxygenase (263 aa).

Substrate-binding positions include Phe-32–His-36, Tyr-94, and Arg-98. His-221 serves as a coordination point for heme. Residue Thr-235 participates in substrate binding.

The protein belongs to the tryptophan 2,3-dioxygenase family. As to quaternary structure, homotetramer. The cofactor is heme.

It carries out the reaction L-tryptophan + O2 = N-formyl-L-kynurenine. It functions in the pathway amino-acid degradation; L-tryptophan degradation via kynurenine pathway; L-kynurenine from L-tryptophan: step 1/2. Functionally, heme-dependent dioxygenase that catalyzes the oxidative cleavage of the L-tryptophan (L-Trp) pyrrole ring and converts L-tryptophan to N-formyl-L-kynurenine. Catalyzes the oxidative cleavage of the indole moiety. In Erythrobacter litoralis (strain HTCC2594), this protein is Tryptophan 2,3-dioxygenase.